The chain runs to 273 residues: MPELPEVETVRRGLEHLIVGKKIVSVEVRVPKMVKTGVEDFQLDILGQTFESIGRRGKYLLLNLNRQTIISHLRMEGKYLLFEDEVPDNKHFHLFFGLDGGSTLVYQDVRKFGTFELLPKSQVEAYFVQKKIGPEPNAKDFKLKPFEEGLAKSHKVIKTLLLDQHLVAGLGNIYVDEVLWAAKVDPERLASQLKKSEIKRIHDETIRILQLAIEKGGSTIRSYKNSLGEDGSMQDCLQVYGKTDQPCARCATPIEKIKVGGRGTHFCPSCQKQ.

Residue Pro-2 is the Schiff-base intermediate with DNA of the active site. Glu-3 (proton donor) is an active-site residue. Catalysis depends on Lys-58, which acts as the Proton donor; for beta-elimination activity. Residues His-91 and Arg-110 each coordinate DNA. The segment at 238-272 adopts an FPG-type zinc-finger fold; the sequence is QVYGKTDQPCARCATPIEKIKVGGRGTHFCPSCQK. The Proton donor; for delta-elimination activity role is filled by Arg-262.

It belongs to the FPG family. As to quaternary structure, monomer. Zn(2+) serves as cofactor.

The enzyme catalyses Hydrolysis of DNA containing ring-opened 7-methylguanine residues, releasing 2,6-diamino-4-hydroxy-5-(N-methyl)formamidopyrimidine.. The catalysed reaction is 2'-deoxyribonucleotide-(2'-deoxyribose 5'-phosphate)-2'-deoxyribonucleotide-DNA = a 3'-end 2'-deoxyribonucleotide-(2,3-dehydro-2,3-deoxyribose 5'-phosphate)-DNA + a 5'-end 5'-phospho-2'-deoxyribonucleoside-DNA + H(+). In terms of biological role, involved in base excision repair of DNA damaged by oxidation or by mutagenic agents. Acts as a DNA glycosylase that recognizes and removes damaged bases. Has a preference for oxidized purines, such as 7,8-dihydro-8-oxoguanine (8-oxoG). Has AP (apurinic/apyrimidinic) lyase activity and introduces nicks in the DNA strand. Cleaves the DNA backbone by beta-delta elimination to generate a single-strand break at the site of the removed base with both 3'- and 5'-phosphates. The protein is Formamidopyrimidine-DNA glycosylase (mutM) of Streptococcus mutans serotype c (strain ATCC 700610 / UA159).